A 249-amino-acid chain; its full sequence is Small ribosomal subunit protein eS6 (249 aa).

Disordered stretches follow at residues 161 to 181 (PLAKEGKKPRTKAPKIQRLVT) and 194 to 249 (LKKQ…SSQK). The span at 216–229 (RSKEAKEKRQEQIA) shows a compositional bias: basic and acidic residues. Phosphoserine is present on residues S235, S236, S240, S244, and S247. The segment covering 236–249 (SLRASTSKSESSQK) has biased composition (low complexity).

This sequence belongs to the eukaryotic ribosomal protein eS6 family. In terms of assembly, component of the small ribosomal subunit. Part of the small subunit (SSU) processome, composed of more than 70 proteins and the RNA chaperone small nucleolar RNA (snoRNA) U3. Post-translationally, ribosomal protein S6 is the major substrate of protein kinases in eukaryote ribosomes. The phosphorylation is stimulated by growth factors, tumor promoting agents, and mitogens. It is dephosphorylated at growth arrest.

It is found in the cytoplasm. It localises to the nucleus. The protein localises to the nucleolus. In terms of biological role, component of the 40S small ribosomal subunit. Plays an important role in controlling cell growth and proliferation through the selective translation of particular classes of mRNA. Part of the small subunit (SSU) processome, first precursor of the small eukaryotic ribosomal subunit. During the assembly of the SSU processome in the nucleolus, many ribosome biogenesis factors, an RNA chaperone and ribosomal proteins associate with the nascent pre-rRNA and work in concert to generate RNA folding, modifications, rearrangements and cleavage as well as targeted degradation of pre-ribosomal RNA by the RNA exosome. The sequence is that of Small ribosomal subunit protein eS6 (rps6) from Xenopus laevis (African clawed frog).